The following is an 842-amino-acid chain: Follistatin-related protein 4 (842 aa).

The first 22 residues, 1-22 (MKPGGFWLHLTLLGASLPAALG), serve as a signal peptide directing secretion. Residues 81–135 (KTGEPECQCLEACRPSYVPVCGSDGRFYENHCKLHRAACLLGKRITVIHSKDCFL) form the Kazal-like domain. 3 disulfides stabilise this stretch: Cys-87-Cys-119, Cys-93-Cys-112, and Cys-101-Cys-133. Positions 174 to 209 (QKRLLVESLFRDLDADGNGHLSSSELAQHVLKKQDL) constitute an EF-hand domain. Asp-187, Asp-189, Asn-191, His-193, and Glu-198 together coordinate Ca(2+). Ig-like domains follow at residues 251-338 (PEDR…LQVN) and 341-426 (PVIR…EDIS). Disulfide bonds link Cys-270–Cys-321 and Cys-362–Cys-413. Asn-318 is a glycosylation site (N-linked (GlcNAc...) asparagine).

Its subcellular location is the secreted. In Homo sapiens (Human), this protein is Follistatin-related protein 4 (FSTL4).